Reading from the N-terminus, the 290-residue chain is UPF0761 membrane protein YihY (290 aa).

6 helical membrane-spanning segments follow: residues 44-64 (LLSLVPLVAVVFALFAAFPMF), 104-124 (VGACGLIVTALLLMYSIDSAL), 140-160 (FAVYWMILTLGPLLAGASLAI), 183-203 (IFPLLLSWISFWLLYSIVPTI), 210-230 (AIVGAFVAALLFEAGKKGFAL), and 244-264 (VLAVIPILFVWVYWTWCIVLL).

The protein belongs to the UPF0761 family.

The protein localises to the cell inner membrane. The sequence is that of UPF0761 membrane protein YihY from Escherichia fergusonii (strain ATCC 35469 / DSM 13698 / CCUG 18766 / IAM 14443 / JCM 21226 / LMG 7866 / NBRC 102419 / NCTC 12128 / CDC 0568-73).